The chain runs to 70 residues: Drosomycin (70 aa).

An N-terminal signal peptide occupies residues 1–20 (MMQIKYLFALFAVLMLVVLG). Residues 21–26 (ANEADA) constitute a propeptide that is removed on maturation. Disulfide bonds link C28–C70, C37–C59, C45–C65, and C49–C67. N-linked (GlcNAc...) asparagine glycosylation is present at N42.

Hemolymph (at protein level). Synthesized in the fat body and is secreted into the blood. In larvae, expressed in the visceral branches and posterior spiracles of the trachea.

It is found in the secreted. Its function is as follows. Possesses antifungal activity and is active against a relatively broad spectrum of filamentous fungi. It inhibits spore germination at high concentrations and at low concentrations delays growth of hyphae which subsequently exhibit abnormal morphology. Spz C-106 in the hemolymph controls expression of the antifungal peptide by acting as a ligand of Tl and inducing an intracellular signaling pathway. Part of a psh-dependent Toll pathway, which may function in activating the systematic immune response in response to localized melanization of the tracheal system. The protein is Drosomycin (Drs) of Drosophila melanogaster (Fruit fly).